The sequence spans 471 residues: Mitochondrial distribution and morphology protein 10 (471 aa).

The disordered stretch occupies residues 313 to 338 (SNSAATPPRIKNSDSQVLSNNSTDSK). Over residues 325-338 (SDSQVLSNNSTDSK) the composition is skewed to polar residues.

It belongs to the MDM10 family. As to quaternary structure, component of the ER-mitochondria encounter structure (ERMES) or MDM complex, composed of MMM1, MDM10, MDM12 and MDM34. Associates with the mitochondrial outer membrane sorting assembly machinery SAM(core) complex.

It is found in the mitochondrion outer membrane. Functionally, component of the ERMES/MDM complex, which serves as a molecular tether to connect the endoplasmic reticulum and mitochondria. Components of this complex are involved in the control of mitochondrial shape and protein biogenesis and may function in phospholipid exchange. MDM10 is involved in the late assembly steps of the general translocase of the mitochondrial outer membrane (TOM complex). Functions in the TOM40-specific route of the assembly of outer membrane beta-barrel proteins, including the association of TOM40 with the receptor TOM22 and small TOM proteins. Can associate with the SAM(core) complex as well as the MDM12-MMM1 complex, both involved in late steps of the major beta-barrel assembly pathway, that is responsible for biogenesis of all outer membrane beta-barrel proteins. May act as a switch that shuttles between both complexes and channels precursor proteins into the TOM40-specific pathway. Plays a role in mitochondrial morphology and in the inheritance of mitochondria. The polypeptide is Mitochondrial distribution and morphology protein 10 (Debaryomyces hansenii (strain ATCC 36239 / CBS 767 / BCRC 21394 / JCM 1990 / NBRC 0083 / IGC 2968) (Yeast)).